A 218-amino-acid polypeptide reads, in one-letter code: Major NAD(P)H-flavin oxidoreductase (218 aa).

Residues 12–16 (RYTSK) and Asn73 each bind FMN. Position 154-159 (154-159 (LARLNI)) interacts with NAD(+). FMN is bound by residues 165 to 166 (EG) and 206 to 208 (KSR).

This sequence belongs to the nitroreductase family. In terms of assembly, homodimer. The cofactor is FMN.

Involved in bioluminescence. It is a good supplier of reduced flavin mononucleotide (FMNH2) to the bioluminescence reaction. Major FMN reductase. It is capable of using both NADH and NADPH as electron donors. As electron acceptor, FMN is the most effective, FAD is considerably effective, and riboflavin is the least effective. The sequence is that of Major NAD(P)H-flavin oxidoreductase from Aliivibrio fischeri (Vibrio fischeri).